The primary structure comprises 361 residues: Septin-2 (361 aa).

Phosphotyrosine is present on Y17. The Septin-type G domain occupies 34-306; sequence KGFEFTLMVV…ENFRSERLKR (273 aa). The tract at residues 44–51 is G1 motif; it reads GESGLGKS. GTP-binding positions include 44-51, T78, G104, and 183-191; these read GESGLGKS and KADTLTLKE. A G3 motif region spans residues 101-104; it reads DTPG. The tract at residues 182 to 185 is G4 motif; it reads AKAD. The residue at position 190 (K190) is an N6-acetyllysine. Y211 carries the post-translational modification Phosphotyrosine. The residue at position 218 (S218) is a Phosphoserine. The GTP site is built by G241 and R256. The important for dimerization stretch occupies residues 260 to 270; sequence WGVVEVENPEH.

It belongs to the TRAFAC class TrmE-Era-EngA-EngB-Septin-like GTPase superfamily. Septin GTPase family. In terms of assembly, septins polymerize into heterooligomeric protein complexes that form filaments, and associate with cellular membranes, actin filaments and microtubules. GTPase activity is required for filament formation. Septin filaments are assembled from asymmetrical heterotrimers, composed of SEPTIN2, SEPTIN6 and SEPTIN7 that associate head-to-head to form a hexameric unit. Interaction between SEPTIN2 and SEPTIN7 seems indirect. Also interacts with SEPTIN9 and SEPTIN5. Interaction with SEPTIN4 not detected. Component of a septin core octameric complex consisting of SEPTIN12, SEPTIN7, SEPTIN6 and SEPTIN2 or SEPTIN4 in the order 12-7-6-2-2-6-7-12 or 12-7-6-4-4-6-7-12 and located in the sperm annulus. Interacts with MAP4. Interacts with DZIP1L.

The protein localises to the cytoplasm. Its subcellular location is the cytoskeleton. The protein resides in the spindle. It is found in the cleavage furrow. It localises to the midbody. The protein localises to the cell cortex. Its subcellular location is the cell projection. The protein resides in the cilium membrane. It is found in the cilium. It localises to the flagellum. Functionally, filament-forming cytoskeletal GTPase. Forms a filamentous structure with SEPTIN12, SEPTIN6, SEPTIN2 and probably SEPTIN4 at the sperm annulus which is required for the structural integrity and motility of the sperm tail during postmeiotic differentiation. Required for normal organization of the actin cytoskeleton. Plays a role in the biogenesis of polarized columnar-shaped epithelium by maintaining polyglutamylated microtubules, thus facilitating efficient vesicle transport, and by impeding MAP4 binding to tubulin. Required for the progression through mitosis. Forms a scaffold at the midplane of the mitotic splindle required to maintain CENPE localization at kinetochores and consequently chromosome congression. During anaphase, may be required for chromosome segregation and spindle elongation. Plays a role in ciliogenesis and collective cell movements. In cilia, required for the integrity of the diffusion barrier at the base of the primary cilium that prevents diffusion of transmembrane proteins between the cilia and plasma membranes: probably acts by regulating the assembly of the tectonic-like complex (also named B9 complex) by localizing TMEM231 protein. This Rattus norvegicus (Rat) protein is Septin-2.